The following is a 1594-amino-acid chain: RB1-inducible coiled-coil protein 1 (1594 aa).

Ser222, Ser229, and Ser237 each carry phosphoserine. A Phosphothreonine modification is found at Thr238. Ser243, Ser253, Ser257, Ser261, and Ser266 each carry phosphoserine. Positions 566 to 569 match the Nuclear localization signal motif; sequence KPRK. Residues Ser624, Ser647, Ser650, Ser652, Ser653, Ser734, Ser1091, Ser1222, Ser1370, and Ser1484 each carry the phosphoserine modification. The disordered stretch occupies residues 638–673; sequence EQKASVSQTSPQSASSPRMESTAGITTTTSPRTPPP. Residues 641 to 654 are compositionally biased toward low complexity; the sequence is ASVSQTSPQSASSP. An FFAT motif is present at residues 731-737; the sequence is DFMSAVN. Coiled-coil stretches lie at residues 859–1397 and 1438–1485; these read LKEK…SSSF and METS…SQSM.

This sequence belongs to the ATG17 family. As to quaternary structure, part of a complex consisting of ATG13/KIAA0652, ULK1 and RB1CC1. This complex associates with ATG101. Interacts with PTK2/FAK1 and PTK2B/PYK2. Interacts with GABARAP and GABARAPL1. Interacts with ATG16L1; the interaction is required for ULK1 complex-dependent autophagy. Interacts with RNF111, SKI and SMAD7. Interacts with COP1 in the cytoplasm of proliferating cells in response to UV stimulation. Interacts with TP53. Interacts with C9orf72. Interacts with WDR45B. Interacts with ATG13; this interaction is increased in the absence of TMEM39A. Interacts with WIPI2. Interacts with TAX1BP1. Interacts (via phosphorylated FFAT motif) with MOSPD2, VAPA and VAPB. Phosphorylation at Ser-734 of the FFAT motif activates interaction with MOSPD2, VAPA and VAPB. Expression levels correlated closely with those of RB1 in cancer cell lines as well as in various normal human tissues. Abundantly expressed in human musculoskeletal and cultured osteosarcoma cells.

Its subcellular location is the nucleus. The protein localises to the cytoplasm. It is found in the cytosol. It localises to the preautophagosomal structure. The protein resides in the lysosome. In terms of biological role, involved in autophagy. Regulates early events but also late events of autophagosome formation through direct interaction with Atg16L1. Required for the formation of the autophagosome-like double-membrane structure that surrounds the Salmonella-containing vacuole (SCV) during S.typhimurium infection and subsequent xenophagy. Involved in repair of DNA damage caused by ionizing radiation, which subsequently improves cell survival by decreasing apoptosis. Inhibits PTK2/FAK1 and PTK2B/PYK2 kinase activity, affecting their downstream signaling pathways. Plays a role as a modulator of TGF-beta-signaling by restricting substrate specificity of RNF111. Functions as a DNA-binding transcription factor. Is a potent regulator of the RB1 pathway through induction of RB1 expression. Plays a crucial role in muscular differentiation. Plays an indispensable role in fetal hematopoiesis and in the regulation of neuronal homeostasis. The chain is RB1-inducible coiled-coil protein 1 from Homo sapiens (Human).